The chain runs to 509 residues: MIPDRNTRSRKAPCWRPRSLRQQLLLGVLAVVTVVLVAVGVVSVLSLSGYVTAMNDAELVESLHALNHSYTRYRDSAQTSTPTGNLPMSQAVLEFTGQTPGNLIAVLHDGVVIGSAVFSEDGARPAPPDVIRAIEAQVWDGGPPRVESLGSLGAYQVDSSAAGADRLFVGVSLSLANQIIARKKVTTVALVGAALVVTAALTVWVVGYALRPLRRVAATAAEVATMPLTDDDHQISVRVRPGDTDPDNEVGIVGHTLNRLLDNVDGALAHRVDSDLRMRQFITDASHELRTPLAAIQGYAELTRQDSSDLPPTTEYALARIESEARRMTLLVDELLLLSRLSEGEDLETEDLDLTDLVINAVNDAAVAAPTHRWVKNLPDEPVWVNGDHARLHQLVSNLLTNAWVHTQPGVTVTIGITCHRTGPNAPCVELSVTDDGPDIDPEILPHLFDRFVRASKSRSNGSGHGLGLAIVSSIVKAHRGSVTAESGNGQTVFRVRLPMIEQQIATTA.

2 consecutive transmembrane segments (helical) span residues 24 to 44 (LLLG…VVSV) and 188 to 208 (VALV…VVGY). An HAMP domain is found at 207 to 269 (GYALRPLRRV…LLDNVDGALA (63 aa)). Residues 284–502 (DASHELRTPL…VFRVRLPMIE (219 aa)) form the Histidine kinase domain. His287 is modified (phosphohistidine; by autocatalysis).

A divalent metal cation serves as cofactor. Autophosphorylated.

It localises to the cell membrane. The enzyme catalyses ATP + protein L-histidine = ADP + protein N-phospho-L-histidine.. Its function is as follows. Member of the two-component regulatory system TrcS/TrcR. Phosphorylates TrcR. The TrcR-TrcS regulatory system may act as a transition regulatory system involved in adapting to an intracellular environment and transitioning from latency to reactivation. This chain is Sensor histidine kinase TrcS, found in Mycobacterium tuberculosis (strain ATCC 25618 / H37Rv).